The sequence spans 432 residues: GTPase Obg (432 aa).

The Obg domain occupies 1 to 158; sequence MFVDQVKIYV…RNIILELKLL (158 aa). An OBG-type G domain is found at 159 to 329; it reads ADVGLVGFPS…LLFAIADLLE (171 aa). GTP-binding positions include 165-172, 190-194, 212-215, 282-285, and 310-312; these read GFPSVGKS, FTTLV, DLPG, NKMD, and SAA. Mg(2+) contacts are provided by Ser-172 and Thr-192. The 79-residue stretch at 350 to 428 folds into the OCT domain; that stretch reads KYEKEEPPFT…LLDYEFEFVD (79 aa).

The protein belongs to the TRAFAC class OBG-HflX-like GTPase superfamily. OBG GTPase family. As to quaternary structure, monomer. Mg(2+) serves as cofactor.

Its subcellular location is the cytoplasm. An essential GTPase which binds GTP, GDP and possibly (p)ppGpp with moderate affinity, with high nucleotide exchange rates and a fairly low GTP hydrolysis rate. Plays a role in control of the cell cycle, stress response, ribosome biogenesis and in those bacteria that undergo differentiation, in morphogenesis control. This is GTPase Obg from Geobacillus kaustophilus (strain HTA426).